The primary structure comprises 215 residues: Redox-sensing transcriptional repressor Rex (215 aa).

Positions 18–57 (LYYRFLKNLHASGKQRVSSAELSDAVKVDSATIRRDFSYF) form a DNA-binding region, H-T-H motif. 92–97 (GVGNLG) lines the NAD(+) pocket.

Belongs to the transcriptional regulatory Rex family. In terms of assembly, homodimer.

Its subcellular location is the cytoplasm. Functionally, modulates transcription in response to changes in cellular NADH/NAD(+) redox state. The chain is Redox-sensing transcriptional repressor Rex from Bacillus velezensis (strain DSM 23117 / BGSC 10A6 / LMG 26770 / FZB42) (Bacillus amyloliquefaciens subsp. plantarum).